The following is a 675-amino-acid chain: Putative acyl-coenzyme A oxidase 3.2, peroxisomal (675 aa).

The N-terminal 34 residues, M1 to C34, are a transit peptide targeting the peroxisome. Residue A442–L457 participates in FAD binding.

It belongs to the acyl-CoA oxidase family. FAD is required as a cofactor.

The protein resides in the peroxisome. It carries out the reaction a 2,3-saturated acyl-CoA + O2 = a (2E)-enoyl-CoA + H2O2. Functionally, catalyzes the desaturation of acyl-CoAs to 2-trans-enoyl-CoAs. This chain is Putative acyl-coenzyme A oxidase 3.2, peroxisomal (ACX3.2), found in Arabidopsis thaliana (Mouse-ear cress).